A 492-amino-acid polypeptide reads, in one-letter code: Probable glycine dehydrogenase (decarboxylating) subunit 2 (492 aa).

Lys274 carries the post-translational modification N6-(pyridoxal phosphate)lysine.

The protein belongs to the GcvP family. C-terminal subunit subfamily. In terms of assembly, the glycine cleavage system is composed of four proteins: P, T, L and H. In this organism, the P 'protein' is a heterodimer of two subunits. Requires pyridoxal 5'-phosphate as cofactor.

It catalyses the reaction N(6)-[(R)-lipoyl]-L-lysyl-[glycine-cleavage complex H protein] + glycine + H(+) = N(6)-[(R)-S(8)-aminomethyldihydrolipoyl]-L-lysyl-[glycine-cleavage complex H protein] + CO2. In terms of biological role, the glycine cleavage system catalyzes the degradation of glycine. The P protein binds the alpha-amino group of glycine through its pyridoxal phosphate cofactor; CO(2) is released and the remaining methylamine moiety is then transferred to the lipoamide cofactor of the H protein. The polypeptide is Probable glycine dehydrogenase (decarboxylating) subunit 2 (Exiguobacterium sibiricum (strain DSM 17290 / CCUG 55495 / CIP 109462 / JCM 13490 / 255-15)).